Consider the following 259-residue polypeptide: Flap endonuclease Xni (259 aa).

Asp109 serves as a coordination point for Mg(2+). The 91-residue stretch at 165 to 255 (VKPQQLSDYW…FNLQDLRFTA (91 aa)) folds into the 5'-3' exonuclease domain. K(+)-binding residues include Leu176, Ile187, and Ile190. The interaction with DNA stretch occupies residues 189–194 (GIGPKA).

The protein belongs to the Xni family. Requires Mg(2+) as cofactor. K(+) serves as cofactor.

In terms of biological role, has flap endonuclease activity. During DNA replication, flap endonucleases cleave the 5'-overhanging flap structure that is generated by displacement synthesis when DNA polymerase encounters the 5'-end of a downstream Okazaki fragment. The polypeptide is Flap endonuclease Xni (Vibrio vulnificus (strain CMCP6)).